The following is a 369-amino-acid chain: Iron-sulfur cluster assembly SufBD family protein AF_2365 (369 aa).

Belongs to the iron-sulfur cluster assembly SufBD family.

This chain is Iron-sulfur cluster assembly SufBD family protein AF_2365, found in Archaeoglobus fulgidus (strain ATCC 49558 / DSM 4304 / JCM 9628 / NBRC 100126 / VC-16).